Here is a 1072-residue protein sequence, read N- to C-terminus: Guanylyl cyclase C (1072 aa).

Residues 1 to 19 (MTSLLGLAVRLLLFQPALM) form the signal peptide. Residues 20 to 433 (VFWASQVRQN…VPGLGPQILM (414 aa)) lie on the Extracellular side of the membrane. N32, N75, N79, N179, N188, N195, N284, N307, N345, and N402 each carry an N-linked (GlcNAc...) asparagine glycan. Residues 434 to 454 (IAVFTLTGILVVLLLIALLVL) traverse the membrane as a helical segment. The Cytoplasmic segment spans residues 455 to 1072 (RKYRRDHALR…NNSDHDSTYF (618 aa)). Positions 489 to 748 (LKIDDDRRRD…KIESTLAKIF (260 aa)) constitute a Protein kinase domain. Residues 823 to 953 (TIYFSDIVGF…DTVNTASRME (131 aa)) form the Guanylate cyclase domain.

It belongs to the adenylyl cyclase class-4/guanylyl cyclase family. As to quaternary structure, homotrimer. Interacts via its C-terminal region with NHERF4. Interacts with the lectin chaperone VIP36. In terms of processing, glycosylation at Asn-75 and/or Asn-79 is required for interaction with VIP36 while glycosylation at Asn-345 and Asn-402 modulates ligand-mediated GC-C activation.

The protein resides in the cell membrane. Its subcellular location is the endoplasmic reticulum membrane. It carries out the reaction GTP = 3',5'-cyclic GMP + diphosphate. Functionally, guanylyl cyclase that catalyzes synthesis of cyclic GMP (cGMP) from GTP. In Mus musculus (Mouse), this protein is Guanylyl cyclase C (Gucy2c).